Reading from the N-terminus, the 292-residue chain is Expansin-like protein 6 (292 aa).

The first 24 residues, 1 to 24 (MIKIIYLIVLLVLLFKNNHIIIKA), serve as a signal peptide directing secretion. Residues 25–267 (DDCPFPQIPI…QITSNSNNIL (243 aa)) are Extracellular-facing. Residues 47 to 150 (HASCGFEKLT…IKVPCPTYGN (104 aa)) form the Expansin-like EG45 domain. Disulfide bonds link Cys-50–Cys-80 and Cys-83–Cys-145. A glycan (N-linked (GlcNAc...) asparagine) is linked at Asn-92. A helical membrane pass occupies residues 268–288 (PPSLYIIFLISILFLIINNIF). Residues 289–292 (SNKY) are Cytoplasmic-facing.

The protein belongs to the expansin family. Expansin A subfamily.

It localises to the membrane. Its function is as follows. May serve to lubricate the movement of the cellulose microfibrils during cell growth and wall extension and/or may serve to maintain the fluid state of the slug cell wall. The sequence is that of Expansin-like protein 6 (expl6) from Dictyostelium discoideum (Social amoeba).